A 314-amino-acid polypeptide reads, in one-letter code: tRNA pseudouridine synthase B (314 aa).

Residue histidine 43 participates in substrate binding. The active-site Nucleophile is aspartate 48. The substrate site is built by tyrosine 76, tyrosine 179, and leucine 200.

It belongs to the pseudouridine synthase TruB family. Type 1 subfamily.

It carries out the reaction uridine(55) in tRNA = pseudouridine(55) in tRNA. In terms of biological role, responsible for synthesis of pseudouridine from uracil-55 in the psi GC loop of transfer RNAs. The polypeptide is tRNA pseudouridine synthase B (Cronobacter sakazakii (strain ATCC BAA-894) (Enterobacter sakazakii)).